Reading from the N-terminus, the 884-residue chain is Receptor-like protein 39 (884 aa).

The first 24 residues, 1-24 (MSELLFRLNFLLLLLLSCVSLASS), serve as a signal peptide directing secretion. The Extracellular segment spans residues 25-847 (FFSFNDPVVG…EEEEQVLNWK (823 aa)). Residues asparagine 59, asparagine 71, and asparagine 92 are each glycosylated (N-linked (GlcNAc...) asparagine). LRR repeat units follow at residues 98 to 122 (FHQL…EFGM), 124 to 146 (NKLE…SFSN), 147 to 170 (LSML…VRNL), 171 to 196 (RKLT…LFEL), 197 to 223 (HNLA…NLNK), 225 to 245 (ELLD…ISNL), 246 to 268 (TQLT…VQNL), 269 to 292 (TKLS…LFTM), 294 to 318 (FLSY…SLSS), and 320 to 344 (LENL…LINL). N-linked (GlcNAc...) asparagine glycosylation is present at asparagine 146. N-linked (GlcNAc...) asparagine glycosylation is found at asparagine 190, asparagine 208, asparagine 244, and asparagine 267. N-linked (GlcNAc...) asparagine glycans are attached at residues asparagine 304 and asparagine 313. The stretch at 345-365 (KELHLSFLNTSYPINLKLFSS) is one LRR 11; degenerate repeat. A glycan (N-linked (GlcNAc...) asparagine) is linked at asparagine 353. LRR repeat units lie at residues 366 to 391 (LKYL…SYIP), 392 to 413 (STLE…ILKT), 414 to 438 (LPNL…LWSL), 440 to 463 (RLSS…ILVN), and 464 to 487 (SSVR…PLSV). Residue asparagine 403 is glycosylated (N-linked (GlcNAc...) asparagine). Asparagine 463 is a glycosylation site (N-linked (GlcNAc...) asparagine). The LRR 17; degenerate repeat unit spans residues 488–507 (NYFSARNNRYGGDIPLSICS). 10 LRR repeats span residues 508 to 529 (RRSL…PPCP), 530 to 553 (SNFL…YYAD), 554 to 577 (APLR…LLNC), 579 to 601 (ALQF…LKAL), 602 to 625 (PKLQ…NQGS), 628 to 652 (FPEL…FFEN), 702 to 725 (SSSA…IGLL), 726 to 749 (KALI…LANL), 750 to 773 (KKIE…IGTL), and 775 to 798 (FLAY…QITG). Asparagine 520 carries an N-linked (GlcNAc...) asparagine glycan. Asparagine 576 carries an N-linked (GlcNAc...) asparagine glycan. Residue asparagine 732 is glycosylated (N-linked (GlcNAc...) asparagine). Asparagine 780 carries an N-linked (GlcNAc...) asparagine glycan. The helical transmembrane segment at 848-868 (GVGIGYGVGVLLGLAIAQLIA) threads the bilayer. Residues 869–884 (SYKPEWLVFLFQSRNH) are Cytoplasmic-facing.

This sequence belongs to the RLP family.

It localises to the cell membrane. In Arabidopsis thaliana (Mouse-ear cress), this protein is Receptor-like protein 39.